The primary structure comprises 314 residues: Protein SPOROCYTELESS (314 aa).

The segment covering 1–17 (MATSLFFMSTDQNSVGN) has biased composition (polar residues). Disordered stretches follow at residues 1–20 (MATS…NPND) and 33–62 (GEIR…PTLR). Positions 62 to 70 (RGMGVAKLE) match the SPL motif. An EAR motif is present at residues 308 to 314 (IDLSLKL).

It belongs to the NOZZLE family. In terms of assembly, homodimer and heterodimer with SPEARs. Interacts in vitro with YAB1, YAB3 and YAB4. Interacts (via EAR motif) with TPL, TPR1, TPR2, TPR3 and TPR4. Interacts with SPEAR1, SPEAR2, SPEAR3, SPEAR4, TCP1, TCP6, TCP8, TCP9, TCP11, TCP15, TCP20, TCP21 and TCP23. Interacts with TCP2, TCP3, TCP4, TCP5, TCP10, TCP13, TCP17 and TCP24. As to expression, expressed in flower buds. Not found in leaves, siliques and stems. Detected in rosette leaves, stem tissue and seedlings.

Its subcellular location is the nucleus. Transcriptional regulator of sporocyte development. Acts as an adapter-like transcriptional repressor recruiting TPL/TPR corepressors to inhibit TCP transcription factors. Required for nucellus and embryo sac development. Plays a central role in patterning both the proximal-distal and the adaxial-abaxial axes during ovule development. Involved in establishing the prospective chalaza of the ovule and in controlling the cell number and the length of the funiculus, and is required for the development of the integuments. Required, with BEL1, for cytokinin-induced PIN1 expression in ovules. Involved in controlling stamen identity. May also regulate the morphology of lateral organs by repressing auxin production. The protein is Protein SPOROCYTELESS of Arabidopsis thaliana (Mouse-ear cress).